Here is a 558-residue protein sequence, read N- to C-terminus: Urocanate hydratase (558 aa).

NAD(+) is bound by residues 50–51, Q128, 174–176, E194, R199, 240–241, 261–265, 271–272, and Y320; these read GG, GMG, NA, QTSAH, and YI. C408 is a catalytic residue. An NAD(+)-binding site is contributed by G490.

This sequence belongs to the urocanase family. The cofactor is NAD(+).

The protein localises to the cytoplasm. The catalysed reaction is 4-imidazolone-5-propanoate = trans-urocanate + H2O. It functions in the pathway amino-acid degradation; L-histidine degradation into L-glutamate; N-formimidoyl-L-glutamate from L-histidine: step 2/3. In terms of biological role, catalyzes the conversion of urocanate to 4-imidazolone-5-propionate. The chain is Urocanate hydratase from Deinococcus radiodurans (strain ATCC 13939 / DSM 20539 / JCM 16871 / CCUG 27074 / LMG 4051 / NBRC 15346 / NCIMB 9279 / VKM B-1422 / R1).